Consider the following 218-residue polypeptide: CD99 antigen-like protein 2 (218 aa).

An N-terminal signal peptide occupies residues 1 to 25 (MVAWRSAFLVCLAFSLATLVQRGSG). The Extracellular portion of the chain corresponds to 26–136 (DFDDFNLKDA…PGSGMVAETG (111 aa)). The tract at residues 72–128 (LADALDDRNDRDDGRRKPIAGGGGFSDKDLEDIVGGGEYKPDKGKGDGRYGSNDDPG) is disordered. 2 stretches are compositionally biased toward basic and acidic residues: residues 76 to 87 (LDDRNDRDDGRR) and 110 to 119 (YKPDKGKGDG). O-linked (Xyl...) (chondroitin sulfate) serine glycosylation occurs at S129. The chain crosses the membrane as a helical span at residues 137-157 (TIAGVASALAMALIGAVSSYI). At 158–218 (SYQQKKFCFS…EPPPSEPARI (61 aa)) the chain is on the cytoplasmic side.

The protein belongs to the CD99 family. In terms of processing, O-glycosylated.

It localises to the cell membrane. Its subcellular location is the cell junction. The protein localises to the secreted. In terms of biological role, plays a role in a late step of leukocyte extravasation helping cells to overcome the endothelial basement membrane. Acts at the same site as, but independently of, PECAM1. Homophilic adhesion molecule, but these interactions may not be required for cell aggregation. The protein is CD99 antigen-like protein 2 (CD99L2) of Pongo abelii (Sumatran orangutan).